We begin with the raw amino-acid sequence, 305 residues long: MTGPDTHAVKQFLLALQTNICAELEQLDGEASFKAESWQRAEGGGGTSRVLTQGKLFEQAGVNFSHVKGAAMPASATAHRPELAGRSFEAMGVSLVIHPNNPYIPTTHANVRFFIASKEGADPVWWFGGGFDLTPYYPFKEDVLSWHQTAADLCAPFGEEVYPKYKKWCDDYFFLPHRNETRGVGGLFFDDLNQAGFEQSFAFMRAVGEGFIQAYAPIVERRKALSFGEHERQFQLYRRGRYVEFNLVYDRGTLFGLQTGGRTESILMSMPPLVRWEYGFTPAAGSVEAELYEVYLKPQDWLQQA.

S94 contacts substrate. A divalent metal cation is bound by residues H98 and H108. H108 acts as the Proton donor in catalysis. 110–112 contributes to the substrate binding site; sequence NVR. 2 residues coordinate a divalent metal cation: H147 and H177. Residues 242–277 form an important for dimerization region; that stretch reads YVEFNLVYDRGTLFGLQTGGRTESILMSMPPLVRWE. 260–262 contributes to the substrate binding site; sequence GGR.

Belongs to the aerobic coproporphyrinogen-III oxidase family. As to quaternary structure, homodimer. A divalent metal cation serves as cofactor.

The protein localises to the cytoplasm. The enzyme catalyses coproporphyrinogen III + O2 + 2 H(+) = protoporphyrinogen IX + 2 CO2 + 2 H2O. The protein operates within porphyrin-containing compound metabolism; protoporphyrin-IX biosynthesis; protoporphyrinogen-IX from coproporphyrinogen-III (O2 route): step 1/1. Functionally, involved in the heme biosynthesis. Catalyzes the aerobic oxidative decarboxylation of propionate groups of rings A and B of coproporphyrinogen-III to yield the vinyl groups in protoporphyrinogen-IX. This chain is Oxygen-dependent coproporphyrinogen-III oxidase, found in Shewanella denitrificans (strain OS217 / ATCC BAA-1090 / DSM 15013).